The sequence spans 239 residues: Methylthioribulose-1-phosphate dehydratase (239 aa).

Cys-94 is a substrate binding site. Zn(2+)-binding residues include His-112 and His-114. Glu-136 functions as the Proton donor/acceptor in the catalytic mechanism. Residue His-192 participates in Zn(2+) binding.

It belongs to the aldolase class II family. MtnB subfamily. Zn(2+) is required as a cofactor.

Its subcellular location is the cytoplasm. It catalyses the reaction 5-(methylsulfanyl)-D-ribulose 1-phosphate = 5-methylsulfanyl-2,3-dioxopentyl phosphate + H2O. It participates in amino-acid biosynthesis; L-methionine biosynthesis via salvage pathway; L-methionine from S-methyl-5-thio-alpha-D-ribose 1-phosphate: step 2/6. Catalyzes the dehydration of methylthioribulose-1-phosphate (MTRu-1-P) into 2,3-diketo-5-methylthiopentyl-1-phosphate (DK-MTP-1-P). Functions in the methionine salvage pathway. May play a role in apoptosis. The sequence is that of Methylthioribulose-1-phosphate dehydratase from Xenopus tropicalis (Western clawed frog).